The following is a 635-amino-acid chain: Early transcription factor 70 kDa subunit (635 aa).

In terms of domain architecture, Helicase ATP-binding spans 32–185 (RSIIDENKSV…SNIISLMSDE (154 aa)). 45 to 52 (HIMGSGKT) is a binding site for ATP. The DEXH box signature appears at 135–138 (DEAH). The Helicase C-terminal domain maps to 326-505 (KFKYFINKIE…TLPFDIKKLL (180 aa)).

This sequence belongs to the helicase family. VETF subfamily. As to quaternary structure, heterodimer of a 70 kDa and a 82 kDa subunit. Part of the early transcription complex composed of ETF, RAP94, and the DNA-directed RNA polymerase.

The protein localises to the virion. Acts with RNA polymerase to initiate transcription from early gene promoters. Is recruited by the RPO-associated protein of 94 kDa (RAP94) to form the early transcription complex, which also contains the core RNA polymerase. ETF heterodimer binds to early gene promoters. The protein is Early transcription factor 70 kDa subunit (VETFS) of Oryctolagus cuniculus (Rabbit).